The sequence spans 438 residues: 23S rRNA (uracil(1939)-C(5))-methyltransferase RlmD (438 aa).

The TRAM domain maps to 10-68 (KTKNVQTITADILDLDYQGLGVAKINGKTWFIENALPHEKVECRILEDKRQYGHAIVKK). [4Fe-4S] cluster contacts are provided by Cys-81, Cys-87, Cys-90, and Cys-168. S-adenosyl-L-methionine is bound by residues Gln-271, Phe-300, Asn-305, Glu-321, Asp-348, and Asp-369. The active-site Nucleophile is the Cys-395.

It belongs to the class I-like SAM-binding methyltransferase superfamily. RNA M5U methyltransferase family. RlmD subfamily.

The enzyme catalyses uridine(1939) in 23S rRNA + S-adenosyl-L-methionine = 5-methyluridine(1939) in 23S rRNA + S-adenosyl-L-homocysteine + H(+). Its function is as follows. Catalyzes the formation of 5-methyl-uridine at position 1939 (m5U1939) in 23S rRNA. The sequence is that of 23S rRNA (uracil(1939)-C(5))-methyltransferase RlmD from Haemophilus influenzae (strain ATCC 51907 / DSM 11121 / KW20 / Rd).